The sequence spans 259 residues: tRNA (guanine-N(7)-)-methyltransferase (259 aa).

Over residues Met-1–Thr-11 the composition is skewed to basic and acidic residues. The interval Met-1 to Asn-29 is disordered. S-adenosyl-L-methionine is bound by residues Glu-89, Glu-114, Asp-141, and Asp-164. Asp-164 is a catalytic residue. Substrate-binding positions include Lys-168, Asp-200, and Thr-238 to Glu-241.

The protein belongs to the class I-like SAM-binding methyltransferase superfamily. TrmB family.

The enzyme catalyses guanosine(46) in tRNA + S-adenosyl-L-methionine = N(7)-methylguanosine(46) in tRNA + S-adenosyl-L-homocysteine. The protein operates within tRNA modification; N(7)-methylguanine-tRNA biosynthesis. Catalyzes the formation of N(7)-methylguanine at position 46 (m7G46) in tRNA. The polypeptide is tRNA (guanine-N(7)-)-methyltransferase (Corynebacterium diphtheriae (strain ATCC 700971 / NCTC 13129 / Biotype gravis)).